An 82-amino-acid polypeptide reads, in one-letter code: uncharacterized protein (82 aa).

Over residues Thr-29–Ser-38 the composition is skewed to low complexity. The tract at residues Thr-29–Ser-64 is disordered. The span at Val-39–Pro-50 shows a compositional bias: polar residues. Low complexity predominate over residues Leu-51–Ser-64.

This is an uncharacterized protein from Dictyostelium discoideum (Social amoeba).